A 214-amino-acid polypeptide reads, in one-letter code: MDSIGENILEKGLLLLGVELDQSQVKVLLAYLRLLEKWNQHYNLTAIKNSKEMISKHVLDSLSIESYLEGRRILDVGSGAGLPGIPLAIARPGCEFVLLDSNAKKTRFLFQASVELGLPNISVVSERVEVYRPSHLFDTIIARAFAKLVDFVAQAEHLCKPRGCLLAMKGRFPQDELEALPASFEIVKACSLSVPEINAQRHLVKLRPRRAGDH.

Residues glycine 77, leucine 82, valine 128–glutamate 129, and arginine 143 contribute to the S-adenosyl-L-methionine site.

The protein belongs to the methyltransferase superfamily. RNA methyltransferase RsmG family.

The protein resides in the cytoplasm. The catalysed reaction is guanosine(527) in 16S rRNA + S-adenosyl-L-methionine = N(7)-methylguanosine(527) in 16S rRNA + S-adenosyl-L-homocysteine. In terms of biological role, specifically methylates the N7 position of guanine in position 527 of 16S rRNA. This Nitrosococcus oceani (strain ATCC 19707 / BCRC 17464 / JCM 30415 / NCIMB 11848 / C-107) protein is Ribosomal RNA small subunit methyltransferase G.